The following is a 154-amino-acid chain: Large ribosomal subunit protein uL13 (154 aa).

The protein belongs to the universal ribosomal protein uL13 family. As to quaternary structure, part of the 50S ribosomal subunit.

Functionally, this protein is one of the early assembly proteins of the 50S ribosomal subunit, although it is not seen to bind rRNA by itself. It is important during the early stages of 50S assembly. The chain is Large ribosomal subunit protein uL13 from Brucella canis (strain ATCC 23365 / NCTC 10854 / RM-666).